The primary structure comprises 342 residues: Dihydroorotase (342 aa).

The Zn(2+) site is built by H13 and H15. Substrate-binding positions include 15-17 (HLR) and N41. The Zn(2+) site is built by K98, H135, and H173. K98 carries the post-translational modification N6-carboxylysine. H135 contacts substrate. L218 contributes to the substrate binding site. D246 serves as a coordination point for Zn(2+). Residue D246 is part of the active site. Substrate is bound by residues H250 and A262.

It belongs to the metallo-dependent hydrolases superfamily. DHOase family. Class II DHOase subfamily. Homodimer. The cofactor is Zn(2+).

The catalysed reaction is (S)-dihydroorotate + H2O = N-carbamoyl-L-aspartate + H(+). It participates in pyrimidine metabolism; UMP biosynthesis via de novo pathway; (S)-dihydroorotate from bicarbonate: step 3/3. In terms of biological role, catalyzes the reversible cyclization of carbamoyl aspartate to dihydroorotate. In Vibrio vulnificus (strain CMCP6), this protein is Dihydroorotase.